An 871-amino-acid chain; its full sequence is DNA mismatch repair protein MutS (871 aa).

630-637 lines the ATP pocket; that stretch reads GPNMGGKS. The segment at 830 to 849 is disordered; it reads KEEPESKSASPVEAALAGIN.

The protein belongs to the DNA mismatch repair MutS family.

This protein is involved in the repair of mismatches in DNA. It is possible that it carries out the mismatch recognition step. This protein has a weak ATPase activity. This is DNA mismatch repair protein MutS from Verminephrobacter eiseniae (strain EF01-2).